The sequence spans 920 residues: MSLLTQIFGSRNQRLLKQYQKTVREINALEPALEQLSDEALKAKTPEFKERLAKGEDIDKLLPEAFAVCREASKRILKMRHFDVQLIGGMALHYGKIAEMGTGEGKTLMATLPAYLNALAAKGVHVVTVNDYLAQRDAEWMSTLYGWLGLTTGINLSQIDHEAKQTAYNADITYGTNNEFGFDYLRDNMVYDTGDRVQRGLHYAIVDEVDSILIDEARTPLIISGQAENHTDLYHKINEVPPLLSLQIGEETPDGKGKIEVPGDYTKDEKSHQVLLTEAGHEKAEQILTRMGLLPEGASLYDAANITLIHHLYAALRAHTLYHKDQHYVVQNGEVVIVDEFTGRLMTGRRWSEGLHQAVEAKEHVKIQNENQTLASITFQNYFRMYSKLSGMTGTADTEAYEFQEIYKLETVVIPPNRPSQRKDRQDQVYKSSDEKYGAMLKDIQDCYERGQPVLVGTTSIENSELLSGILTKAKLPHNVLNAKQHAREAEIIAQAGRPKAITIATNMAGRGTDIVLGGNVAKQVQIIEANDALSDADKAAQAQKLREEWQSLHDHVVNAGGLHIIGTERHESRRVDNQLRGRSGRQGDPGSSRFYLSLDDALLRIFAGDRVRAIMDRLKMPEGEPIEAGIVSRSIESAQRKVEARNFDIRKQLLEYDDVANDQRKVIYQQRNELLETTDVSEMITSLRQGVFSDLFRTYVPEQSMEEQWDLPGLDAVLRDEWKLDFSLAKVLEAEPTITDEEMLERLLKFTDDVYAEKIEIVGKEAFAGFERSVMLQAVDSHWREHLAALDHLRQGIHLRGYAQKNPKQEYKREAFELFGQMLNLIKDEVVKIVMTVRIQSREEIDAAEEQLSQSHVENVHYQHADFDADAAPEELLAPTAVASEANQTQVNALPKVGRNDPCPCGSGKKYKQCHGRLA.

ATP contacts are provided by residues glutamine 85, 103-107 (GEGKT), and aspartate 514. Residues cysteine 904, cysteine 906, cysteine 915, and histidine 916 each coordinate Zn(2+).

It belongs to the SecA family. Monomer and homodimer. Part of the essential Sec protein translocation apparatus which comprises SecA, SecYEG and auxiliary proteins SecDF-YajC and YidC. It depends on Zn(2+) as a cofactor.

The protein resides in the cell inner membrane. Its subcellular location is the cytoplasm. The enzyme catalyses ATP + H2O + cellular proteinSide 1 = ADP + phosphate + cellular proteinSide 2.. In terms of biological role, part of the Sec protein translocase complex. Interacts with the SecYEG preprotein conducting channel. Has a central role in coupling the hydrolysis of ATP to the transfer of proteins into and across the cell membrane, serving both as a receptor for the preprotein-SecB complex and as an ATP-driven molecular motor driving the stepwise translocation of polypeptide chains across the membrane. In Janthinobacterium sp. (strain Marseille) (Minibacterium massiliensis), this protein is Protein translocase subunit SecA.